Here is a 189-residue protein sequence, read N- to C-terminus: 2-oxoglutarate synthase subunit KorC (189 aa).

In terms of assembly, heterotetramer of the KorA, KorB, KorC and KorD subunits.

It carries out the reaction 2 oxidized [2Fe-2S]-[ferredoxin] + 2-oxoglutarate + CoA = succinyl-CoA + 2 reduced [2Fe-2S]-[ferredoxin] + CO2 + H(+). This is 2-oxoglutarate synthase subunit KorC (korC) from Methanothermobacter thermautotrophicus (strain ATCC 29096 / DSM 1053 / JCM 10044 / NBRC 100330 / Delta H) (Methanobacterium thermoautotrophicum).